The primary structure comprises 125 residues: Succinate dehydrogenase assembly factor 3, mitochondrial (125 aa).

A mitochondrion-targeting transit peptide spans 1–30 (MTGRHVSRVRSLYRRILQLHRALPPDLKAL).

This sequence belongs to the complex I LYR family. SDHAF3 subfamily. In terms of assembly, interacts with Sdhb within an Sdha-Sdhb subcomplex.

It localises to the mitochondrion matrix. Plays an essential role in the assembly of succinate dehydrogenase (SDH), an enzyme complex (also referred to as respiratory complex II) that is a component of both the tricarboxylic acid (TCA) cycle and the mitochondrial electron transport chain, and which couples the oxidation of succinate to fumarate with the reduction of ubiquinone (coenzyme Q) to ubiquinol. Promotes maturation of the iron-sulfur protein subunit Sdhb of the SDH catalytic dimer, protecting it from the deleterious effects of oxidants. May act together with SDHAF1. In Rattus norvegicus (Rat), this protein is Succinate dehydrogenase assembly factor 3, mitochondrial.